A 302-amino-acid polypeptide reads, in one-letter code: Protoheme IX farnesyltransferase (302 aa).

9 consecutive transmembrane segments (helical) span residues 28–48, 50–70, 95–115, 122–142, 150–170, 176–196, 221–241, 243–263, and 282–302; these read VVAL…PGVP, WSVL…AAVV, IAPL…MVVL, LTAW…TLFL, IVIG…AVTG, ALLL…ALAI, LHIL…FVTG, SGGI…QYAV, and ITYL…FVPA.

This sequence belongs to the UbiA prenyltransferase family. Protoheme IX farnesyltransferase subfamily.

Its subcellular location is the cell inner membrane. It catalyses the reaction heme b + (2E,6E)-farnesyl diphosphate + H2O = Fe(II)-heme o + diphosphate. It participates in porphyrin-containing compound metabolism; heme O biosynthesis; heme O from protoheme: step 1/1. Converts heme B (protoheme IX) to heme O by substitution of the vinyl group on carbon 2 of heme B porphyrin ring with a hydroxyethyl farnesyl side group. In Marinobacter nauticus (strain ATCC 700491 / DSM 11845 / VT8) (Marinobacter aquaeolei), this protein is Protoheme IX farnesyltransferase.